The following is a 562-amino-acid chain: Serine palmitoyltransferase 2 (562 aa).

The chain crosses the membrane as a helical span at residues 61–81; that stretch reads LITYLNYLILIILGHIHDFLG. Lys365 carries the N6-(pyridoxal phosphate)lysine modification.

This sequence belongs to the class-II pyridoxal-phosphate-dependent aminotransferase family. Pyridoxal 5'-phosphate is required as a cofactor.

Its subcellular location is the membrane. The enzyme catalyses L-serine + hexadecanoyl-CoA + H(+) = 3-oxosphinganine + CO2 + CoA. It functions in the pathway lipid metabolism; sphingolipid metabolism. The sequence is that of Serine palmitoyltransferase 2 (LCB2) from Kluyveromyces lactis (strain ATCC 8585 / CBS 2359 / DSM 70799 / NBRC 1267 / NRRL Y-1140 / WM37) (Yeast).